Consider the following 119-residue polypeptide: MKLLASPFLLLLPVMLMSMVFSSPNPGVARSHGDQHLAPRRWLLEGGQECECKDWFLQAPKRKATAVLGPPRKQCPCDHVKGREKKNRHQKHHRKSQRPSRACQQFLKRCHLASFALPL.

The first 22 residues, 1 to 22 (MKLLASPFLLLLPVMLMSMVFS), serve as a signal peptide directing secretion. Positions 75–100 (CPCDHVKGREKKNRHQKHHRKSQRPS) are disordered. Cystine bridges form between cysteine 75-cysteine 103 and cysteine 77-cysteine 110. Basic residues predominate over residues 82 to 98 (GREKKNRHQKHHRKSQR).

The protein belongs to the intercrine alpha (chemokine CxC) family. In terms of processing, likely to undergo an endoproteolytic process to form a four-cysteine-containing mature peptide with a canonical CXC chemokine scaffold after secretion. In terms of tissue distribution, detected in lung, trachea, lung, tongue thyroid, submaxillary gland, epididymis, and uterus tissues and at a lower level in ovary, prostate and in intestinal tissues.

Its subcellular location is the secreted. In terms of biological role, chemokine that acts as a chemoattractant for monocytes, macrophages and dendritic cells. Plays a role in angiogenesis and possibly in the development of tumors. Acts as an anti-inflammatory in the stomach. May play a role in the innate defense against infections. Activates the C-X-C chemokine receptor GPR35 to induce a rapid and transient rise in the level of intracellular calcium ions. In Mus musculus (Mouse), this protein is C-X-C motif chemokine 17 (Cxcl17).